The primary structure comprises 431 residues: Acrosin (431 aa).

Residues 1–16 form the signal peptide; it reads MLPTAVLLVLVVSVVA. N19 carries N-linked (GlcNAc...) asparagine glycosylation. Disulfide bonds link C22–C152, C26–C160, C71–C87, C175–C244, C207–C223, and C234–C264. Residues 40 to 288 enclose the Peptidase S1 domain; sequence VVGGQAAQQG…FLDWIASRIG (249 aa). Residues H86 and D140 each act as charge relay system in the active site. Residue N208 is glycosylated (N-linked (GlcNAc...) asparagine). S238 acts as the Charge relay system in catalysis. Positions 295–385 are disordered; that stretch reads IQPATPTPPT…PPPASTKPPQ (91 aa). A compositionally biased stretch (basic residues) spans 331 to 341; it reads PHPHPHPHPHP. Over residues 342-381 the composition is skewed to pro residues; the sequence is RPPQPPAAQAPPPPPPPPPPPPPPPPPPPPPPPPPPPAST. The propeptide at 351–431 is pro-rich; that stretch reads APPPPPPPPP…TEIPEVTLAS (81 aa).

This sequence belongs to the peptidase S1 family. In terms of assembly, heavy chain (catalytic) and a light chain linked by two disulfide bonds. Forms a heterodimer with SERPINA5.

The enzyme catalyses Preferential cleavage: Arg-|-Xaa, Lys-|-Xaa.. Its activity is regulated as follows. Inhibited by SERPINA5. Functionally, acrosin is the major protease of mammalian spermatozoa. It is a serine protease of trypsin-like cleavage specificity, it is synthesized in a zymogen form, proacrosin and stored in the acrosome. The chain is Acrosin (ACR) from Oryctolagus cuniculus (Rabbit).